The following is a 453-amino-acid chain: Zinc finger and BTB domain-containing protein 44 (453 aa).

Lys-4 participates in a covalent cross-link: Glycyl lysine isopeptide (Lys-Gly) (interchain with G-Cter in SUMO2). The 68-residue stretch at Cys-31–Thr-98 folds into the BTB domain. Phosphoserine is present on residues Ser-135, Ser-159, Ser-161, Ser-165, Ser-191, Ser-194, and Ser-199. Thr-200 is subject to Phosphothreonine. Residues Gln-241–Arg-265 are disordered. Residue Lys-290 forms a Glycyl lysine isopeptide (Lys-Gly) (interchain with G-Cter in SUMO2) linkage. 2 disordered regions span residues Ser-295 to Glu-324 and Ser-336 to Arg-368. Low complexity predominate over residues Ser-304–Gln-318. Polar residues predominate over residues Thr-352–Ala-361. 2 C2H2-type zinc fingers span residues Phe-399–His-421 and Phe-427–His-449.

It localises to the nucleus. The sequence is that of Zinc finger and BTB domain-containing protein 44 (Zbtb44) from Rattus norvegicus (Rat).